The primary structure comprises 244 residues: Guanine nucleotide exchange factor rei-1 (244 aa).

2 coiled-coil regions span residues 6 to 39 (DQLI…KKQF) and 81 to 144 (VQQA…KAEK). A disordered region spans residues 221-244 (DQIHQERSSQSSLAPSSDAESDSS). The span at 228–238 (SSQSSLAPSSD) shows a compositional bias: low complexity.

Belongs to the SH3BP5 family. In terms of assembly, homodimer, tetramer and multimer. Interacts with rab-11.1. Binds preferentially to the GDP-bound form of rab-11.1. As to expression, expressed in germ cells.

Its subcellular location is the cytoplasmic granule. The protein resides in the golgi apparatus membrane. In terms of biological role, guanine nucleotide exchange factor for Rab GTPase Rab-11.1. Spatially and temporally regulates the distribution of Rab-11.1 to target membranes during embryogenesis. Plays a role in cytokinesis, probably by targeting rab-11.1 to the cleavage furrows. This chain is Guanine nucleotide exchange factor rei-1, found in Caenorhabditis elegans.